A 565-amino-acid chain; its full sequence is Periplasmic trehalase (565 aa).

The signal sequence occupies residues 1–30; sequence MKSPAPSRPQKMALIPACIFLCFAALSVQA. Substrate is bound by residues Arg152, 159-160, Asn196, 205-207, 277-279, and Gly310; these read WD, RSQ, and RPE. Residues Asp312 and Glu496 each act as proton donor/acceptor in the active site. Residue Glu511 participates in substrate binding. The tract at residues 539–565 is disordered; that stretch reads CDNVPATRPLSESTTQPLKQKEAEPTP.

This sequence belongs to the glycosyl hydrolase 37 family. In terms of assembly, monomer.

It localises to the periplasm. It carries out the reaction alpha,alpha-trehalose + H2O = alpha-D-glucose + beta-D-glucose. In terms of biological role, provides the cells with the ability to utilize trehalose at high osmolarity by splitting it into glucose molecules that can subsequently be taken up by the phosphotransferase-mediated uptake system. The protein is Periplasmic trehalase of Escherichia coli O45:K1 (strain S88 / ExPEC).